Consider the following 315-residue polypeptide: Replication factor C small subunit (315 aa).

An ATP-binding site is contributed by 43–50; that stretch reads GSPGVGKT.

The protein belongs to the activator 1 small subunits family. RfcS subfamily. Heteromultimer composed of small subunits (RfcS) and large subunits (RfcL).

Its function is as follows. Part of the RFC clamp loader complex which loads the PCNA sliding clamp onto DNA. The chain is Replication factor C small subunit from Methanococcus maripaludis (strain DSM 14266 / JCM 13030 / NBRC 101832 / S2 / LL).